The chain runs to 663 residues: Dual specificity protein phosphatase 8 (663 aa).

The Rhodanese domain maps to 23 to 138 (GPGGPLVIDS…FSSCFPGLCE (116 aa)). Residues 160-302 (GLTRILPHLY…LLEYERSLKL (143 aa)) enclose the Tyrosine-protein phosphatase domain. Cys246 acts as the Phosphocysteine intermediate in catalysis. 2 disordered regions span residues 313–367 (LGTP…STAP) and 404–624 (YAPS…FKRR). Composition is skewed to low complexity over residues 334–353 (STSE…REGS), 427–448 (LDSP…PDSV), and 546–557 (SAGAPGPGNSSS). Residues 558–577 (SGGGGGGGGGGGGGGGGGGS) are compositionally biased toward gly residues. Residues 578-600 (SSSNSSSSSSSSSSSSSSSSSSS) are compositionally biased toward low complexity.

Belongs to the protein-tyrosine phosphatase family. Non-receptor class dual specificity subfamily. As to quaternary structure, monomer. As to expression, expressed predominantly in brain and lung.

The protein localises to the cytoplasm. The protein resides in the nucleus. It carries out the reaction O-phospho-L-tyrosyl-[protein] + H2O = L-tyrosyl-[protein] + phosphate. The catalysed reaction is O-phospho-L-seryl-[protein] + H2O = L-seryl-[protein] + phosphate. It catalyses the reaction O-phospho-L-threonyl-[protein] + H2O = L-threonyl-[protein] + phosphate. Functionally, has phosphatase activity with synthetic phosphatase substrates and negatively regulates mitogen-activated protein kinase activity, presumably by catalysing their dephosphorylation. Expected to display protein phosphatase activity toward phosphotyrosine, phosphoserine and phosphothreonine residues. The protein is Dual specificity protein phosphatase 8 (Dusp8) of Mus musculus (Mouse).